Consider the following 501-residue polypeptide: Endoglucanase 1 (501 aa).

The N-terminal stretch at 1-29 (MALYLSSSRLITFLSFILLLSNGFSSSSS) is a signal peptide. The active-site Nucleophile is the Asp-96. Active-site residues include His-422, Asp-473, and Glu-482.

This sequence belongs to the glycosyl hydrolase 9 (cellulase E) family.

It localises to the secreted. The catalysed reaction is Endohydrolysis of (1-&gt;4)-beta-D-glucosidic linkages in cellulose, lichenin and cereal beta-D-glucans.. This chain is Endoglucanase 1 (CEL2), found in Arabidopsis thaliana (Mouse-ear cress).